A 192-amino-acid polypeptide reads, in one-letter code: UPF0149 protein YgfB (192 aa).

Belongs to the UPF0149 family.

The polypeptide is UPF0149 protein YgfB (Salmonella typhi).